Here is a 543-residue protein sequence, read N- to C-terminus: Probable malate:quinone oxidoreductase (543 aa).

This sequence belongs to the MQO family. Requires FAD as cofactor.

The catalysed reaction is (S)-malate + a quinone = a quinol + oxaloacetate. It functions in the pathway carbohydrate metabolism; tricarboxylic acid cycle; oxaloacetate from (S)-malate (quinone route): step 1/1. This is Probable malate:quinone oxidoreductase from Acinetobacter baylyi (strain ATCC 33305 / BD413 / ADP1).